A 674-amino-acid polypeptide reads, in one-letter code: UvrABC system protein C (674 aa).

Positions 64-142 (NGPGVYRMLN…IKRLRPRFNV (79 aa)) constitute a GIY-YIG domain. The region spanning 252-287 (QAVKATIASAMAEASENLDFERAALYRDRLAALSHV) is the UVR domain.

Belongs to the UvrC family. Interacts with UvrB in an incision complex.

The protein localises to the cytoplasm. Its function is as follows. The UvrABC repair system catalyzes the recognition and processing of DNA lesions. UvrC both incises the 5' and 3' sides of the lesion. The N-terminal half is responsible for the 3' incision and the C-terminal half is responsible for the 5' incision. The protein is UvrABC system protein C of Rhizobium meliloti (strain 1021) (Ensifer meliloti).